Reading from the N-terminus, the 254-residue chain is 4-hydroxy-tetrahydrodipicolinate reductase (254 aa).

G7–I12 lines the NAD(+) pocket. R35 is a binding site for NADP(+). NAD(+) contacts are provided by residues G91–T93 and A115–M118. H147 serves as the catalytic Proton donor/acceptor. H148 is a binding site for (S)-2,3,4,5-tetrahydrodipicolinate. The active-site Proton donor is the K151. G157–T158 contributes to the (S)-2,3,4,5-tetrahydrodipicolinate binding site.

Belongs to the DapB family.

It is found in the cytoplasm. The enzyme catalyses (S)-2,3,4,5-tetrahydrodipicolinate + NAD(+) + H2O = (2S,4S)-4-hydroxy-2,3,4,5-tetrahydrodipicolinate + NADH + H(+). It catalyses the reaction (S)-2,3,4,5-tetrahydrodipicolinate + NADP(+) + H2O = (2S,4S)-4-hydroxy-2,3,4,5-tetrahydrodipicolinate + NADPH + H(+). It participates in amino-acid biosynthesis; L-lysine biosynthesis via DAP pathway; (S)-tetrahydrodipicolinate from L-aspartate: step 4/4. Catalyzes the conversion of 4-hydroxy-tetrahydrodipicolinate (HTPA) to tetrahydrodipicolinate. The chain is 4-hydroxy-tetrahydrodipicolinate reductase from Helicobacter pylori (strain G27).